The sequence spans 743 residues: Probable TonB-dependent receptor BfrD (743 aa).

The N-terminal stretch at 1–30 is a signal peptide; the sequence is MKFYSSHPMPESLAAAIAVPLLGLLPAAQA. Residues 62–168 enclose the TBDR plug domain; it reads PLADTPRTVQ…AGGSINLVTK (107 aa). Positions 173–743 constitute a TBDR beta-barrel domain; it reads QDFTEVQAGI…SAMLTFKLSY (571 aa). Residues 726–743 carry the TonB C-terminal box motif; the sequence is YAALGPGRSAMLTFKLSY.

This sequence belongs to the TonB-dependent receptor family.

The protein resides in the cell outer membrane. In terms of biological role, probably involved in iron transport. The protein is Probable TonB-dependent receptor BfrD (bfrD) of Bordetella pertussis (strain Tohama I / ATCC BAA-589 / NCTC 13251).